Reading from the N-terminus, the 145-residue chain is Eukaryotic translation initiation factor 1A (145 aa).

Residues M1–G15 are compositionally biased toward basic residues. Residues M1–E25 form a disordered region. Basic and acidic residues predominate over residues K16–E25. The S1-like domain occupies D22–M96.

It belongs to the eIF-1A family.

Its function is as follows. Seems to be required for maximal rate of protein biosynthesis. Enhances ribosome dissociation into subunits and stabilizes the binding of the initiator Met-tRNA(I) to 40 S ribosomal subunits. This Onobrychis viciifolia (Common sainfoin) protein is Eukaryotic translation initiation factor 1A.